Reading from the N-terminus, the 88-residue chain is UPF0367 protein AM1_1885 (88 aa).

It belongs to the UPF0367 family.

This chain is UPF0367 protein AM1_1885, found in Acaryochloris marina (strain MBIC 11017).